A 133-amino-acid chain; its full sequence is Small ribosomal subunit protein uS8 (133 aa).

It belongs to the universal ribosomal protein uS8 family. As to quaternary structure, part of the 30S ribosomal subunit. Contacts proteins S5 and S12.

In terms of biological role, one of the primary rRNA binding proteins, it binds directly to 16S rRNA central domain where it helps coordinate assembly of the platform of the 30S subunit. This chain is Small ribosomal subunit protein uS8, found in Prochlorococcus marinus (strain MIT 9313).